The following is a 1038-amino-acid chain: uncharacterized protein (1038 aa).

The segment covering 1-14 has biased composition (polar residues); it reads MEENTAQKQSNATG. The disordered stretch occupies residues 1 to 100; sequence MEENTAQKQS…QSENENYDFS (100 aa). Residues 58–71 show a composition bias toward basic and acidic residues; sequence NPERELNSDGTDRI. Residues 72 to 83 show a composition bias toward acidic residues; the sequence is IEEEEEEDDIEN. 3 positions are modified to phosphoserine: Ser-112, Ser-113, and Ser-114. Disordered regions lie at residues 144-201, 360-381, 422-441, 454-526, and 556-575; these read GKDP…VKRR, ELDN…TEQA, SHSN…DEKL, QTTK…SGEL, and TNSE…QPGT. Over residues 156-179 the composition is skewed to low complexity; it reads SSMASSSTRSSQSSQVSAIQPQSQ. Basic and acidic residues predominate over residues 180–198; it reads DDNRVSDIRQMENRRELNV. Composition is skewed to basic and acidic residues over residues 426–441 and 489–505; these read HSNE…DEKL and DAEK…EHHP. A Phosphoserine modification is found at Ser-436. The span at 506 to 522 shows a compositional bias: polar residues; sequence SITSVNSPFLYSPSKQP. A phosphoserine mark is found at Ser-618 and Ser-856. 3 disordered regions span residues 803-864, 940-974, and 1005-1024; these read RGSL…ASAD, GEAP…SPAR, and KAKS…KESK. Over residues 826 to 859 the composition is skewed to low complexity; the sequence is TLSLKTSTTGLSSHSKSAENNSTQQSTTSPSINS. Over residues 955-974 the composition is skewed to polar residues; the sequence is VSTTTKLAKRITQPSLSPAR. The span at 1009 to 1020 shows a compositional bias: low complexity; that stretch reads EQSNAKSSSSSI.

It localises to the cytoplasm. This is an uncharacterized protein from Schizosaccharomyces pombe (strain 972 / ATCC 24843) (Fission yeast).